The primary structure comprises 513 residues: Sodium/potassium/calcium exchanger 5 (513 aa).

The N-terminal stretch at 1–35 (MRTDVFLQRRKRRDVLLSIIALLLLIFAIVHLVFC) is a signal peptide. The Extracellular portion of the chain corresponds to 36 to 78 (AGLSFQGSSSARVRRDLENASECVQPQSSEFPEGFFTVQERKD). The chain crosses the membrane as a helical span at residues 79–99 (GGILIYFMIIFYMLLSVSIVC). At 100–123 (DEYFLPSLEVISERLGLSQDVAGA) the chain is on the cytoplasmic side. Residues 124–144 (TFMAAGSSAPELVTAFLGVFV) traverse the membrane as a helical segment. Residues 145 to 148 (TKGD) lie on the Extracellular side of the membrane. A helical membrane pass occupies residues 149-169 (IGVSTIMGSAVYNLLCICAAC). The Cytoplasmic segment spans residues 170–181 (GLLSSAVGRLSC). A helical transmembrane segment spans residues 182 to 202 (WPLFRDCVAYAISVAAVIAII). Residues 203–207 (SDNRV) are Extracellular-facing. The chain crosses the membrane as a helical span at residues 208–228 (YWYDGACLLLVYGVYVAVLCF). Over 229 to 315 (DLRISEYVMQ…KSVFSMPDHD (87 aa)) the chain is Cytoplasmic. The helical transmembrane segment at 316 to 336 (LKRILWVLSLPVSTLLFVSVP) threads the bilayer. Residues 337 to 350 (DCRRPFWKNFYMLT) are Extracellular-facing. A helical transmembrane segment spans residues 351–371 (FLMSAVWISAFTYVLVWMVTI). Residues 372–381 (VGETLGIPDT) are Cytoplasmic-facing. The helical transmembrane segment at 382-402 (VMGMTLLAAGTSIPDTVASVM) threads the bilayer. The Extracellular portion of the chain corresponds to 403 to 420 (VAREGKSDMAMSNIVGSN). Residues 421–441 (VFDMLCLGLPWFIQTVFVDVG) form a helical membrane-spanning segment. Residues 442-450 (SPVEVNSSG) lie on the Cytoplasmic side of the membrane. The chain crosses the membrane as a helical span at residues 451–471 (LVFMSCTLLLSIIFLFLAVHI). Topologically, residues 472 to 482 (NGWKLDWKLGL) are extracellular. A helical transmembrane segment spans residues 483–503 (VCLACYILFATLSILYELGII). At 504–513 (GNNPIRSCSD) the chain is on the cytoplasmic side.

The protein belongs to the Ca(2+):cation antiporter (CaCA) (TC 2.A.19) family. SLC24A subfamily. Highly expressed in melanin-producing cells. Colocalizes with melanin biosynthesis marker dct.

Its subcellular location is the golgi apparatus. The protein resides in the trans-Golgi network membrane. The protein localises to the melanosome. It carries out the reaction Ca(2+)(out) + K(+)(out) + 4 Na(+)(in) = Ca(2+)(in) + K(+)(in) + 4 Na(+)(out). Functionally, calcium, potassium:sodium antiporter that transports 1 Ca(2+) and 1 K(+) to the melanosome in exchange for 4 cytoplasmic Na(+). Involved in pigmentation, possibly by participating in ion transport in melanosomes. Predominant sodium-calcium exchanger in melanocytes. The polypeptide is Sodium/potassium/calcium exchanger 5 (slc24a5) (Danio rerio (Zebrafish)).